A 266-amino-acid polypeptide reads, in one-letter code: Transcription factor BIP1 (266 aa).

The tract at residues 1–73 (MAMYMPSTAS…DREAQRAIRA (73 aa)) is disordered. Polar residues-rich tracts occupy residues 7–22 (STASSTTHIRSPSGTP) and 47–56 (RSVSTLTPSQ). The bZIP domain occupies 54–95 (PSQLARKRANDREAQRAIRARTKEHIERLEREVEELKSKQNR). The segment at 59-81 (RKRANDREAQRAIRARTKEHIER) is basic motif. The span at 61 to 73 (RANDREAQRAIRA) shows a compositional bias: basic and acidic residues. The tract at residues 82 to 89 (LEREVEEL) is leucine-zipper.

This sequence belongs to the bZIP family. Expressed in appressoria.

The protein localises to the nucleus. In terms of biological role, transcription factor that is required for infection of plants hosts. Is not implicated in the development of appressoria or the subsequent penetration of host leaves, but is necessary for the initial establishment of the fungus within plant cells by orchestrating the expression of a unique set of early invasion-related genes within appressoria, encoding secreted effectors, enzymes, secondary metabolism-related enzymes, and signaling membrane receptors. Controls the expression of targeted genes by interacting directly with a 5'-TGACTC-3' motif present in their promoters. The chain is Transcription factor BIP1 from Pyricularia oryzae (strain 70-15 / ATCC MYA-4617 / FGSC 8958) (Rice blast fungus).